Reading from the N-terminus, the 284-residue chain is Bifunctional protein FolD (284 aa).

NADP(+) contacts are provided by residues 166–168 and I232; that span reads GAS.

This sequence belongs to the tetrahydrofolate dehydrogenase/cyclohydrolase family. Homodimer.

The enzyme catalyses (6R)-5,10-methylene-5,6,7,8-tetrahydrofolate + NADP(+) = (6R)-5,10-methenyltetrahydrofolate + NADPH. It carries out the reaction (6R)-5,10-methenyltetrahydrofolate + H2O = (6R)-10-formyltetrahydrofolate + H(+). It functions in the pathway one-carbon metabolism; tetrahydrofolate interconversion. Catalyzes the oxidation of 5,10-methylenetetrahydrofolate to 5,10-methenyltetrahydrofolate and then the hydrolysis of 5,10-methenyltetrahydrofolate to 10-formyltetrahydrofolate. The chain is Bifunctional protein FolD from Pseudoalteromonas translucida (strain TAC 125).